We begin with the raw amino-acid sequence, 938 residues long: Glutamate receptor ionotropic, NMDA 1 (938 aa).

The signal sequence occupies residues 1–18; that stretch reads MSTMRLLTLALLFSCSVA. At 19–559 the chain is on the extracellular side; it reads RAACDPKIVN…TLDSFMQPFQ (541 aa). 10 N-linked (GlcNAc...) asparagine glycosylation sites follow: N61, N203, N239, N276, N300, N350, N368, N440, N471, and N491. C79 and C308 form a disulfide bridge. Disulfide bonds link C420/C454 and C436/C455. P516, T518, and R523 together coordinate glycine. A helical membrane pass occupies residues 560 to 580; that stretch reads STLWLLVGLSVHVVAVMLYLL. The Cytoplasmic segment spans residues 581-604; that stretch reads DRFSPFGRFKVNSEEEEEDALTLS. Residues 603–624 form a pore-forming region; sequence LSSAMWFSWGVLLNSGIGEGAP. An intramembrane region (discontinuously helical) is located at residues 605–615; it reads SAMWFSWGVLL. Residues 616–627 are Cytoplasmic-facing; it reads NSGIGEGAPRSF. The chain crosses the membrane as a helical span at residues 628–648; the sequence is SARILGMVWAGFAMIIVASYT. Over 649-811 the chain is Extracellular; it reads ANLAAFLVLD…SNAPATLTFE (163 aa). The N-linked (GlcNAc...) asparagine glycan is linked to N674. Positions 688 and 732 each coordinate glycine. A disulfide bond links C744 and C798. N771 is a glycosylation site (N-linked (GlcNAc...) asparagine). Residues 812 to 835 traverse the membrane as a helical segment; the sequence is NMAGVFMLVAGGIVAGIFLIFIEI. Residues 836–938 lie on the Cytoplasmic side of the membrane; that stretch reads AYKRHKDARR…LQLCSRHRES (103 aa). Phosphoserine; by PKC is present on residues S889, S890, S896, and S897. The segment at 889–938 is disordered; sequence SSFKRRRSSKDTSTGGGRGALQNQKDTVLPRRAIEREEGQLQLCSRHRES. The span at 916-927 shows a compositional bias: basic and acidic residues; that stretch reads VLPRRAIEREEG.

It belongs to the glutamate-gated ion channel (TC 1.A.10.1) family. NR1/GRIN1 subfamily. In terms of assembly, heterotetramer; the NMDAR subunits are modular and harbor tiered domains that function in concert to regulate opening and closing of the cation-selective ion channel pore. Forms heterotetrameric channels composed of two GluN1/zeta subunits (GRIN1), and two identical GluN2/epsilon subunits (GRIN2A, GRIN2B, GRIN2C or GRIN2D) or GluN3 subunits (GRIN3A or GRIN3B) (in vitro). Can also form heterotetrameric channels that contain at least two GluN1 subunits and at least two different GluN2 subunits (or a combination of one GluN2 and one GluN3 subunits) (in vitro). In vivo, the subunit composition may vary in function of the expression levels of the different subunits. Found in a complex with GRIN2A or GRIN2B, GRIN3A and PPP2CB. Found in a complex with GRIN2A or GRIN2B and GRIN3B. Interacts with SNX27 (via PDZ domain); the interaction is required for recycling to the plasma membrane when endocytosed and prevent degradation in lysosomes. Interacts with DLG4 and MPDZ. Interacts with LRFN1 and LRFN2. Interacts with MYZAP. Found in a complex with DLG4 and PRR7. Found in a complex with GRIN2B and PRR7. Interacts with PRR7; the interaction is reduced following NMDA receptor activity. In terms of processing, NMDA is probably regulated by C-terminal phosphorylation of an isoform of GRIN1 by PKC. Dephosphorylated on Ser-897 probably by protein phosphatase 2A (PPP2CB). Its phosphorylated state is influenced by the formation of the NMDAR-PPP2CB complex and the NMDAR channel activity.

The protein resides in the cell membrane. The protein localises to the postsynaptic cell membrane. It localises to the postsynaptic density membrane. Its subcellular location is the synaptic cell membrane. The enzyme catalyses Ca(2+)(in) = Ca(2+)(out). The catalysed reaction is Na(+)(in) = Na(+)(out). It carries out the reaction K(+)(in) = K(+)(out). Its activity is regulated as follows. NMDA glutamate receptor activity is inhbited by Mg2(+) in a voltage-dependent manner; Mg2(+)-induced blockade occurs only at negative potentials and decreases with membrane depolarization. 7-chlorokynurenate (50 uM) or Zn2(+) (100 uM) partially inhibit the NMDA glutamate receptor activity, while acide 2-amino-5-phosphonovalerique(100 uM) almost completely blocked the NMDA glutamate receptor activity. Dizocilpine (1 uM) results in long lasting and almost complete block of the NMDA glutamate receptor activity. In terms of biological role, component of N-methyl-D-aspartate (NMDA) receptors (NMDARs) that function as heterotetrameric, ligand-gated cation channels with high calcium permeability and voltage-dependent block by Mg(2+). NMDARs participate in synaptic plasticity for learning and memory formation by contributing to the long-term potentiation (LTP). Channel activation requires binding of the neurotransmitter L-glutamate to the GluN2 subunit, glycine or D-serine binding to the GluN1 subunit, plus membrane depolarization to eliminate channel inhibition by Mg(2+). NMDARs mediate simultaneously the potasium efflux and the influx of calcium and sodium. Each GluN2 or GluN3 subunit confers differential attributes to channel properties, including activation, deactivation and desensitization kinetics, pH sensitivity, Ca2(+) permeability, and binding to allosteric modulators. This is Glutamate receptor ionotropic, NMDA 1 from Homo sapiens (Human).